Consider the following 127-residue polypeptide: Large ribosomal subunit protein bL12 (127 aa).

The protein belongs to the bacterial ribosomal protein bL12 family. Homodimer. Part of the ribosomal stalk of the 50S ribosomal subunit. Forms a multimeric L10(L12)X complex, where L10 forms an elongated spine to which 2 to 4 L12 dimers bind in a sequential fashion. Binds GTP-bound translation factors.

In terms of biological role, forms part of the ribosomal stalk which helps the ribosome interact with GTP-bound translation factors. Is thus essential for accurate translation. In Acidiphilium cryptum (strain JF-5), this protein is Large ribosomal subunit protein bL12.